Reading from the N-terminus, the 286-residue chain is tRNA (guanine-N(7)-)-methyltransferase (286 aa).

2 positions are modified to phosphoserine: Ser7 and Ser59. S-adenosyl-L-methionine-binding positions include Gly103, 126 to 127 (EI), 161 to 162 (NA), and Cys181. Asp184 is a catalytic residue. 259–261 (TEE) contributes to the S-adenosyl-L-methionine binding site.

The protein belongs to the class I-like SAM-binding methyltransferase superfamily. TrmB family. As to quaternary structure, forms a complex with TRM82.

It is found in the nucleus. The catalysed reaction is guanosine(46) in tRNA + S-adenosyl-L-methionine = N(7)-methylguanosine(46) in tRNA + S-adenosyl-L-homocysteine. It functions in the pathway tRNA modification; N(7)-methylguanine-tRNA biosynthesis. Its function is as follows. Methyltransferase that catalyzes the formation of N(7)-methylguanine at position 46 (m7G46) in tRNA, a modification required to maintain stability of tRNAs; its absence resulting in tRNA decay. Both the D-stem and T-stem structures of tRNAs are required for efficient methyltransferase activity. The sequence is that of tRNA (guanine-N(7)-)-methyltransferase from Saccharomyces cerevisiae (strain RM11-1a) (Baker's yeast).